The sequence spans 1063 residues: Mediator of RNA polymerase II transcription subunit 15 (1063 aa).

A compositionally biased stretch (low complexity) spans 149–175 (LQQSQIQQQRQQQQQQSQQPQQTQQPQ). Disordered regions lie at residues 149 to 194 (LQQS…SGSV), 286 to 342 (QQQQ…NATN), 422 to 482 (SQNA…QPIN), 500 to 544 (NKAR…AFTK), and 728 to 789 (TASI…SVGN). Composition is skewed to polar residues over residues 176–192 (ASSP…QRSG) and 301–310 (PQGNVGAQSL). Residues 311–342 (QSMSPQDQPSTQQQQPQRTAAPPNNPNVNATN) show a composition bias toward low complexity. The segment covering 422 to 442 (SQNAPNTNKLGNPQPDNTGNP) has biased composition (polar residues). The span at 443–460 (QAFSQQAFAQQQQQQQQQ) shows a compositional bias: low complexity. Polar residues-rich tracts occupy residues 461 to 482 (LHRT…QPIN) and 500 to 527 (NKAR…PNLD). Low complexity-rich tracts occupy residues 528 to 542 (TSST…PSAF) and 733 to 758 (QQQQ…SVSS). The segment covering 766–776 (SIPNAQPSVPG) has biased composition (polar residues). Serine 948 is subject to Phosphoserine.

This sequence belongs to the Mediator complex subunit 15 family. As to quaternary structure, component of the Mediator complex. Component of a med15-hrp1 subcomplex, which flexibly associates with the other Mediator components.

It localises to the nucleus. In terms of biological role, component of the Mediator complex, a coactivator involved in the regulated transcription of nearly all RNA polymerase II-dependent genes. Mediator functions as a bridge to convey information from gene-specific regulatory proteins to the basal RNA polymerase II transcription machinery. Mediator is recruited to promoters by direct interactions with regulatory proteins and serves as a scaffold for the assembly of a functional preinitiation complex with RNA polymerase II and the general transcription factors. Component of a med15-hrp1 subcomplex, linking the Mediator complex to the chromatin-remodeling activity of hrp1 at a distinct subset of hrp1-bound gene promoters. The sequence is that of Mediator of RNA polymerase II transcription subunit 15 (med15) from Schizosaccharomyces pombe (strain 972 / ATCC 24843) (Fission yeast).